Consider the following 2464-residue polypeptide: Highly reducing polyketide synthase xilA (2464 aa).

The Ketosynthase family 3 (KS3) domain occupies 9–437 (HDPIALVGIG…GTNGHCIIDH (429 aa)). Active-site for beta-ketoacyl synthase activity residues include Cys182, His318, and His360. Residues 461-487 (QNGINGTNGTNGTNGTNGTNGTNGTNG) show a composition bias toward low complexity. A disordered region spans residues 461–495 (QNGINGTNGTNGTNGTNGTNGTNGTNGHHNPKTEA). The region spanning 589–911 (FIFTGQGAQW…LKRNEDAQRL (323 aa)) is the Malonyl-CoA:ACP transacylase (MAT) domain. The tract at residues 983 to 1121 (HDLLGSKVPG…GQIKIEVSTF (139 aa)) is N-terminal hotdog fold. Residues 983-1286 (HDLLGSKVPG…FTSLNNEQES (304 aa)) enclose the PKS/mFAS DH domain. The active-site Proton acceptor; for dehydratase activity is His1015. The C-terminal hotdog fold stretch occupies residues 1133 to 1286 (GRLVDAQTWY…FTSLNNEQES (154 aa)). Asp1199 functions as the Proton donor; for dehydratase activity in the catalytic mechanism. Positions 1282 to 1490 (NEQESTSTGD…TEPAHHSTIT (209 aa)) are methyltransferase (CMeT) domain. In terms of domain architecture, Enoyl reductase (ER) spans 1716 to 2028 (GILTSLYFKP…KGTHIGKMVI (313 aa)). A Ketoreductase (KR) domain is found at 2052–2231 (ANYILVGGMS…ATTVSLGFIN (180 aa)). Residues 2383-2461 (ETVTFVTDAI…SIAQVIVEEA (79 aa)) form the Carrier domain. Ser2420 carries the O-(pantetheine 4'-phosphoryl)serine modification.

The cofactor is pantetheine 4'-phosphate.

The protein operates within secondary metabolite biosynthesis. Functionally, highly reducing polyketide synthase; part of the gene cluster that mediates the biosynthesis of the 6-methyl-2-pyrone derivative xylariolide D. XilA produces the 5-alkyl-6-methyl-2-pyrone backbone called prexylariolide D via sequential condensations of 4 malonyl-CoA units with one acetyl-CoA starter unit. During the biosynthesis, the linear polyketide chain is branched by the addition of an acetyl unit as the origin of the methyl group at the 2-pyrone ring. Prexylariolide D is then hydroxylated at the side chain by xilC to form the final product, xylariolide D. The chain is Highly reducing polyketide synthase xilA from Penicillium rubens (strain ATCC 28089 / DSM 1075 / NRRL 1951 / Wisconsin 54-1255) (Penicillium chrysogenum).